Reading from the N-terminus, the 251-residue chain is 3-deoxy-manno-octulosonate cytidylyltransferase (251 aa).

This sequence belongs to the KdsB family.

The protein localises to the cytoplasm. The catalysed reaction is 3-deoxy-alpha-D-manno-oct-2-ulosonate + CTP = CMP-3-deoxy-beta-D-manno-octulosonate + diphosphate. The protein operates within nucleotide-sugar biosynthesis; CMP-3-deoxy-D-manno-octulosonate biosynthesis; CMP-3-deoxy-D-manno-octulosonate from 3-deoxy-D-manno-octulosonate and CTP: step 1/1. Its pathway is bacterial outer membrane biogenesis; lipopolysaccharide biosynthesis. Functionally, activates KDO (a required 8-carbon sugar) for incorporation into bacterial lipopolysaccharide in Gram-negative bacteria. This is 3-deoxy-manno-octulosonate cytidylyltransferase from Rhizobium etli (strain CIAT 652).